A 65-amino-acid polypeptide reads, in one-letter code: MFGLGGQELVLILLIILLLFGAKKLPELARGLGRGMKEFKKAQTEIEEEFNKVVEEPPAKEKTTT.

The chain crosses the membrane as a helical span at residues 1–21 (MFGLGGQELVLILLIILLLFG).

This sequence belongs to the TatA/E family. As to quaternary structure, forms a complex with TatC.

The protein localises to the cell inner membrane. In terms of biological role, part of the twin-arginine translocation (Tat) system that transports large folded proteins containing a characteristic twin-arginine motif in their signal peptide across membranes. TatA could form the protein-conducting channel of the Tat system. This chain is Sec-independent protein translocase protein TatA, found in Chlorobium phaeobacteroides (strain DSM 266 / SMG 266 / 2430).